Here is a 345-residue protein sequence, read N- to C-terminus: S-adenosylmethionine:tRNA ribosyltransferase-isomerase (345 aa).

This sequence belongs to the QueA family. As to quaternary structure, monomer.

It localises to the cytoplasm. It carries out the reaction 7-aminomethyl-7-carbaguanosine(34) in tRNA + S-adenosyl-L-methionine = epoxyqueuosine(34) in tRNA + adenine + L-methionine + 2 H(+). Its pathway is tRNA modification; tRNA-queuosine biosynthesis. Transfers and isomerizes the ribose moiety from AdoMet to the 7-aminomethyl group of 7-deazaguanine (preQ1-tRNA) to give epoxyqueuosine (oQ-tRNA). The chain is S-adenosylmethionine:tRNA ribosyltransferase-isomerase from Lactococcus lactis subsp. lactis (strain IL1403) (Streptococcus lactis).